Here is a 113-residue protein sequence, read N- to C-terminus: Putative anti-sigma factor antagonist TM1081 homolog (113 aa).

One can recognise an STAS domain in the interval 1-110 (MFPYKIVEDV…DTISEALEEV (110 aa)). S55 bears the Phosphoserine mark.

It belongs to the anti-sigma-factor antagonist family. In terms of processing, phosphorylated on a serine residue.

Its function is as follows. In the phosphorylated form it could act as an anti-anti-sigma factor that counteracts an anti-sigma factor and thus releases a sigma factor from inhibition. This Thermotoga neapolitana protein is Putative anti-sigma factor antagonist TM1081 homolog.